Here is a 202-residue protein sequence, read N- to C-terminus: Adenylyl-sulfate kinase (202 aa).

ATP is bound at residue 31-38; sequence GLSASGKS. Ser105 (phosphoserine intermediate) is an active-site residue.

This sequence belongs to the APS kinase family.

It carries out the reaction adenosine 5'-phosphosulfate + ATP = 3'-phosphoadenylyl sulfate + ADP + H(+). The protein operates within sulfur metabolism; hydrogen sulfide biosynthesis; sulfite from sulfate: step 2/3. Catalyzes the synthesis of activated sulfate. The polypeptide is Adenylyl-sulfate kinase (MET14) (Saccharomyces bayanus (Yeast)).